A 707-amino-acid chain; its full sequence is Ribosomal RNA large subunit methyltransferase K/L (707 aa).

Residues 44–155 form the THUMP domain; sequence VIYNLCLWSR…NDILTVSFDL (112 aa).

It belongs to the methyltransferase superfamily. RlmKL family.

The protein resides in the cytoplasm. The enzyme catalyses guanosine(2445) in 23S rRNA + S-adenosyl-L-methionine = N(2)-methylguanosine(2445) in 23S rRNA + S-adenosyl-L-homocysteine + H(+). It carries out the reaction guanosine(2069) in 23S rRNA + S-adenosyl-L-methionine = N(2)-methylguanosine(2069) in 23S rRNA + S-adenosyl-L-homocysteine + H(+). Its function is as follows. Specifically methylates the guanine in position 2445 (m2G2445) and the guanine in position 2069 (m7G2069) of 23S rRNA. The protein is Ribosomal RNA large subunit methyltransferase K/L of Legionella pneumophila (strain Paris).